Here is a 1038-residue protein sequence, read N- to C-terminus: Type I restriction enzyme EcoR124I/EcoR124II endonuclease subunit (1038 aa).

The segment at 31-249 (QSESDLEREL…LKDFTATCFQ (219 aa)) is nuclease domain. The tract at residues 250 to 469 (KHTLLNVLVN…SYVITDAIRD (220 aa)) is motor 1 domain. The Helicase ATP-binding domain occupies 294–439 (KNWSKPESGG…YQFGFTGTPI (146 aa)). 307 to 314 (HTTGSGKT) lines the ATP pocket. The DEAH box motif lies at 408 to 411 (DECH). Residues 470 to 702 (EKVLKFKVDY…YDATKTFGNI (233 aa)) form a motor 2 domain region. Residues 720–732 (GDKNTKNVVLEKS) form a motor 2-helicase linker region. Positions 732–860 (SYTEYMEGFT…NDIRDWQRRE (129 aa)) are helicase domain. Positions 859–886 (REKEAEKKEKSTTDWDDVVFEVDLLKSQ) are helicase-CTD linker. The segment at 886–1038 (QEINLDYILG…EKFKGVGGKI (153 aa)) is C-terminal domain.

The protein belongs to the HsdR family. As to quaternary structure, a monomer in solution. The type I restriction/modification system is composed of three polypeptides R, M and S; the restriction enzyme has stoichiometry R(2)M(2)S(1) while the methyltransferase is M(2)S(1). There is an equilibrium between R(2)M(2)S(1) and R(1)M(2)S(1); the latter is methylation and translocation proficient but restriction deficient. In terms of assembly, (Microbial infection) Holoenenzyme interacts with Escherichia phage T7 protein Ocr; this interaction leads to the inhibition of the restriction activity, but may still allow methylation and translocation.

It catalyses the reaction Endonucleolytic cleavage of DNA to give random double-stranded fragments with terminal 5'-phosphates, ATP is simultaneously hydrolyzed.. Functionally, the restriction (R) subunit of a type I restriction enzyme that recognizes 5'-GAAN(6)RTCG-3' (for EcoR124I) and 5'-GAAN(7)RTCG-3' (for EcoR124II) and cleaves a random distance away. Subunit R is required for both nuclease and ATPase activities, but not for modification. After locating an unmethylated recognition site, the enzyme complex serves as a molecular motor that translocates DNA in an ATP-dependent manner until a collision occurs that triggers cleavage. The enzyme undergoes major structural changes to bring the motor domains into contact with DNA, allowing DNA translocation. This prevents DNA access to the catalytic domains of both the R and M subunits, preventing both restriction and methylation. The R(1)M(2)S(1) complex translocates an average of 555 bp/second on nicked DNA; the R(2)M(2)S(1) complex translocates at double that speed. The 2 R subunit motors are independent and track along the helical pitch of the DNA, inducing positive supercoiling ahead of themselves. The protein is Type I restriction enzyme EcoR124I/EcoR124II endonuclease subunit of Escherichia coli.